The sequence spans 459 residues: MFIAMADFKLLLLILILLSLFELDLLHFHHDFFSPFPVKIGLLLISIFFYAYSTTRSKPVYLVDFSCHQPTDSCKISSETFFNMAKGAQLYTEETIQFMTRILNRSGLGDDTYSPRCMLTSPPTPSMYEARHESELVIFGALNSLFKKTGIEPREVGIFIVNCSLFNPNPSLSSMIVNRYKLKTDVKTYNLSGISVDLATNLLKANPNTYAVIVSTENMTLSMYRGNDRSMLVPNCLFRVGGAAVMLSNRSQDRVRSKYELTHIVRTHKGSSDKHYTCAEQKEDSKGIVGVALSKELTVVAGDTLKTNLTALGPLVLPLSEKLRFILFLVKSKLFRLKVSPYVPDFKLCFKHFCIHAGGRALLDAVEKGLGLSEFDLEPSRMTLHRFGNTSSSSLWYELAYVEAKCRVKRGDRVWQLAFGSGFKCNSIVWRALRTIPANESLVGNPWGDSVHKYPVHVT.

Residues 1-25 form the signal peptide; it reads MFIAMADFKLLLLILILLSLFELDL. A helical membrane pass occupies residues 32-52; the sequence is FFSPFPVKIGLLLISIFFYAY. In terms of domain architecture, FAE spans 52–334; that stretch reads YSTTRSKPVY…FILFLVKSKL (283 aa). Residues His-268, His-352, His-356, His-385, and Asn-389 contribute to the active site.

The protein belongs to the thiolase-like superfamily. Chalcone/stilbene synthases family. As to expression, expressed in siliques.

Its subcellular location is the membrane. It carries out the reaction a very-long-chain acyl-CoA + malonyl-CoA + H(+) = a very-long-chain 3-oxoacyl-CoA + CO2 + CoA. Its pathway is lipid metabolism; fatty acid biosynthesis. The chain is Probable 3-ketoacyl-CoA synthase 14 from Arabidopsis thaliana (Mouse-ear cress).